Reading from the N-terminus, the 226-residue chain is ATP-dependent dethiobiotin synthetase BioD (226 aa).

12–17 (DAGKTV) lines the ATP pocket. Thr-16 provides a ligand contact to Mg(2+). Lys-39 is a catalytic residue. Ser-43 serves as a coordination point for substrate. Residues Asp-47, 108–111 (EGVG), 168–169 (NC), 200–202 (PYL), and Asn-207 each bind ATP. Mg(2+) contacts are provided by Asp-47 and Glu-108.

Belongs to the dethiobiotin synthetase family. As to quaternary structure, homodimer. The cofactor is Mg(2+).

It localises to the cytoplasm. The catalysed reaction is (7R,8S)-7,8-diammoniononanoate + CO2 + ATP = (4R,5S)-dethiobiotin + ADP + phosphate + 3 H(+). It carries out the reaction (7R,8S)-8-amino-7-(carboxyamino)nonanoate + ATP = (4R,5S)-dethiobiotin + ADP + phosphate + H(+). It functions in the pathway cofactor biosynthesis; biotin biosynthesis; biotin from 7,8-diaminononanoate: step 1/2. In terms of biological role, catalyzes a mechanistically unusual reaction, the ATP-dependent insertion of CO2 between the N7 and N8 nitrogen atoms of 7,8-diaminopelargonic acid (DAPA, also called 7,8-diammoniononanoate) to form a ureido ring. This cyanobacterium does not encode bioA (which catalyzes the formation of the precursor for this reaction in the cannonical pathway), instead it encodes bioU, which replaces bioA and also performs the first half of the cannonical BioD reaction. Thus in this organism BioD has a different substrate. The sequence is that of ATP-dependent dethiobiotin synthetase BioD from Cyanothece sp. (strain PCC 7425 / ATCC 29141).